Here is a 559-residue protein sequence, read N- to C-terminus: Terpene synthase 1 (559 aa).

The Mg(2+) site is built by D312, D316, D456, and E464. The short motif at 312 to 316 (DDLYD) is the DDXXD motif element.

Belongs to the terpene synthase family. Tpsa subfamily. The cofactor is Mg(2+). Mn(2+) serves as cofactor. In terms of tissue distribution, mostly expressed in stems and, to a lower extent, in leaves, roots and fruits.

The enzyme catalyses (2E,6E)-farnesyl diphosphate = (-)-(E)-beta-caryophyllene + diphosphate. The catalysed reaction is (2E,6E)-farnesyl diphosphate = alpha-humulene + diphosphate. The protein operates within secondary metabolite biosynthesis; terpenoid biosynthesis. Functionally, sesquiterpene synthase involved in the biosynthesis of volatile compounds that contribute to the characteristic flavors of black pepper. Mediates the conversion of (2E,6E)-farnesyl diphosphate (FPP) into beta-caryophyllene and, as a minor compound, into alpha-humulene. In Piper nigrum (Black pepper), this protein is Terpene synthase 1.